The primary structure comprises 205 residues: Putative C-type lectin protein FPV001/FPV260 (205 aa).

One can recognise a C-type lectin domain in the interval 84-187 (CPRDWISHNG…CSVRRYLVCK (104 aa)).

The chain is Putative C-type lectin protein FPV001/FPV260 from Fowlpox virus (strain NVSL) (FPV).